The following is a 180-amino-acid chain: UPF0227 protein Spro_1925 (180 aa).

It belongs to the UPF0227 family.

The polypeptide is UPF0227 protein Spro_1925 (Serratia proteamaculans (strain 568)).